The chain runs to 721 residues: uncharacterized protein (721 aa).

Disordered stretches follow at residues Thr-196 to Pro-291 and Ala-370 to Gln-513. Low complexity-rich tracts occupy residues Ser-202 to Pro-224 and Ser-232 to Pro-250. Pro residues-rich tracts occupy residues Pro-264–Ala-283 and Ala-379–Pro-389. Positions Ala-419–Ala-429 are enriched in low complexity. The segment covering Val-435–Thr-446 has biased composition (pro residues). The segment covering Val-470–Ser-484 has biased composition (polar residues). Residues Ala-491 to Asp-505 are compositionally biased toward low complexity.

This is an uncharacterized protein from Mycobacterium tuberculosis (strain ATCC 25618 / H37Rv).